The sequence spans 599 residues: Phosphomethylpyrimidine synthase (599 aa).

The segment covering 1-16 has biased composition (polar residues); the sequence is MSAASANSVTNPSAWE. Disordered regions lie at residues 1–53 and 82–108; these read MSAA…PNDP and EDTEEYAGRERNLADDGRSAQRRGAAS. Residues 87–100 show a composition bias toward basic and acidic residues; sequence YAGRERNLADDGRS. Substrate contacts are provided by residues Asn192, Met221, Tyr250, His286, 306-308, 347-350, and Glu386; these read SRG and DGLR. His390 provides a ligand contact to Zn(2+). Tyr413 provides a ligand contact to substrate. His454 is a binding site for Zn(2+). Residues Cys534, Cys537, and Cys542 each coordinate [4Fe-4S] cluster.

Belongs to the ThiC family. [4Fe-4S] cluster serves as cofactor.

It carries out the reaction 5-amino-1-(5-phospho-beta-D-ribosyl)imidazole + S-adenosyl-L-methionine = 4-amino-2-methyl-5-(phosphooxymethyl)pyrimidine + CO + 5'-deoxyadenosine + formate + L-methionine + 3 H(+). It participates in cofactor biosynthesis; thiamine diphosphate biosynthesis. Functionally, catalyzes the synthesis of the hydroxymethylpyrimidine phosphate (HMP-P) moiety of thiamine from aminoimidazole ribotide (AIR) in a radical S-adenosyl-L-methionine (SAM)-dependent reaction. In Corynebacterium diphtheriae (strain ATCC 700971 / NCTC 13129 / Biotype gravis), this protein is Phosphomethylpyrimidine synthase.